A 231-amino-acid chain; its full sequence is Large ribosomal subunit protein uL1 (231 aa).

This sequence belongs to the universal ribosomal protein uL1 family. Part of the 50S ribosomal subunit.

Functionally, binds directly to 23S rRNA. The L1 stalk is quite mobile in the ribosome, and is involved in E site tRNA release. In terms of biological role, protein L1 is also a translational repressor protein, it controls the translation of the L11 operon by binding to its mRNA. The sequence is that of Large ribosomal subunit protein uL1 from Allorhizobium ampelinum (strain ATCC BAA-846 / DSM 112012 / S4) (Agrobacterium vitis (strain S4)).